The chain runs to 279 residues: Putative methyltransferase Jann_4284 (279 aa).

In Jannaschia sp. (strain CCS1), this protein is Putative methyltransferase Jann_4284.